A 534-amino-acid chain; its full sequence is Prolyl 4-hydroxylase subunit alpha-1 (534 aa).

The signal sequence occupies residues 1–17 (MIWYILIIGILLPQSLA). A glycan (N-linked (GlcNAc...) asparagine) is linked at N113. A TPR repeat occupies 205 to 238 (VSVLDYLSYAVYQQGDLDKALLLTKKLLELDPEH). The N-linked (GlcNAc...) asparagine glycan is linked to N259. Residues 411–519 (TAEELQVANY…KWVSNKWLHE (109 aa)) form the Fe2OG dioxygenase domain. Fe cation is bound by residues H429, D431, and H500. A 2-oxoglutarate-binding site is contributed by K510.

Belongs to the P4HA family. In terms of assembly, heterotetramer of two alpha-1 chains and two beta chains (P4HB)(the beta chain is the multi-functional PDI), where P4HB plays the role of a structural subunit; this tetramer catalyzes the formation of 4-hydroxyproline in collagen. Requires Fe(2+) as cofactor. L-ascorbate serves as cofactor. As to expression, expressed in the heart, liver, skeletal muscle, kidney, placenta, lung and pancreas.

Its subcellular location is the endoplasmic reticulum lumen. The catalysed reaction is L-prolyl-[collagen] + 2-oxoglutarate + O2 = trans-4-hydroxy-L-prolyl-[collagen] + succinate + CO2. With respect to regulation, inhibited by poly(L-proline). Its function is as follows. Catalyzes the post-translational formation of 4-hydroxyproline in -Xaa-Pro-Gly- sequences in collagens and other proteins. In Homo sapiens (Human), this protein is Prolyl 4-hydroxylase subunit alpha-1 (P4HA1).